The chain runs to 274 residues: tRNA pseudouridine synthase A (274 aa).

The active-site Nucleophile is D54. Y112 is a binding site for substrate.

Belongs to the tRNA pseudouridine synthase TruA family. In terms of assembly, homodimer.

The enzyme catalyses uridine(38/39/40) in tRNA = pseudouridine(38/39/40) in tRNA. In terms of biological role, formation of pseudouridine at positions 38, 39 and 40 in the anticodon stem and loop of transfer RNAs. In Solidesulfovibrio magneticus (strain ATCC 700980 / DSM 13731 / RS-1) (Desulfovibrio magneticus), this protein is tRNA pseudouridine synthase A.